Consider the following 584-residue polypeptide: Lamin-B1 (584 aa).

The interval 1–22 is disordered; sequence MAAAVAPLSPQPRGAAASAALS. The interval 2–33 is head; sequence AAAVAPLSPQPRGAAASAALSPTRISRLQEKE. Ser22 is modified (phosphoserine). Residues 31–387 form the IF rod domain; that stretch reads EKEELRQLND…KLLESEEERL (357 aa). Residues 34–70 are coil 1A; sequence ELRQLNDRLAVYIDKVRSLETENSALQRRVSEREQVC. Positions 81-218 are coil 1B; the sequence is FETELADARK…NVYEEEIKET (138 aa). Positions 243 to 385 are coil 2; the sequence is QALKEIREQH…YRKLLESEEE (143 aa). A tail region spans residues 386 to 584; the sequence is RLRLSPGPSS…RKPERSCVVM (199 aa). 2 disordered regions span residues 388-431 and 548-584; these read RLSP…SVSI and TVNEGEEEEEEGEEEILEDVIHQQGSPRKPERSCVVM. Over residues 394–408 the composition is skewed to low complexity; sequence SSRVTVSRASSSRSV. The Nuclear localization signal motif lies at 414–419; sequence KRKRID. The LTD domain maps to 429 to 545; that stretch reads VSISHSASAT…EEVAQRSTVF (117 aa). A compositionally biased stretch (acidic residues) spans 551-565; it reads EGEEEEEEGEEEILE. The span at 575–584 shows a compositional bias: basic and acidic residues; sequence RKPERSCVVM. Cys581 carries the post-translational modification Cysteine methyl ester. The S-farnesyl cysteine moiety is linked to residue Cys581. Positions 582–584 are cleaved as a propeptide — removed in mature form; sequence VVM.

This sequence belongs to the intermediate filament family. Homodimer. Lamin dimers then assemble into dimeric head-to-tail polymers. Ultimately, two head-to-tail polymers assemble laterally into a protofilament with a uniformly shaped rod of 3.5 nm in diameter. In terms of processing, phosphorylation plays a key role in lamin organization, subcellular localization and nuclear envelope disintegration. Phosphorylation by CDK1 at Ser-22 at the onset of mitosis drives lamin disassembly and nuclear envelope breakdown.

Its subcellular location is the nucleus lamina. It localises to the nucleus envelope. It is found in the nucleus. The protein resides in the nucleoplasm. The protein localises to the nucleus matrix. In terms of biological role, lamins are intermediate filament proteins that assemble into a filamentous meshwork, and which constitute the major components of the nuclear lamina, a fibrous layer on the nucleoplasmic side of the inner nuclear membrane. Lamins provide a framework for the nuclear envelope, bridging the nuclear envelope and chromatin. Plays an important role in nuclear assembly, chromatin organization, nuclear membrane and telomere dynamics. The polypeptide is Lamin-B1 (LMNB1) (Gallus gallus (Chicken)).